Here is a 505-residue protein sequence, read N- to C-terminus: Probable cytosol aminopeptidase (505 aa).

The Mn(2+) site is built by K269 and D274. K281 is an active-site residue. Positions 292, 351, and 353 each coordinate Mn(2+). Residue R355 is part of the active site.

This sequence belongs to the peptidase M17 family. Mn(2+) is required as a cofactor.

The protein localises to the cytoplasm. It catalyses the reaction Release of an N-terminal amino acid, Xaa-|-Yaa-, in which Xaa is preferably Leu, but may be other amino acids including Pro although not Arg or Lys, and Yaa may be Pro. Amino acid amides and methyl esters are also readily hydrolyzed, but rates on arylamides are exceedingly low.. It carries out the reaction Release of an N-terminal amino acid, preferentially leucine, but not glutamic or aspartic acids.. Presumably involved in the processing and regular turnover of intracellular proteins. Catalyzes the removal of unsubstituted N-terminal amino acids from various peptides. The chain is Probable cytosol aminopeptidase from Rhodococcus erythropolis (strain PR4 / NBRC 100887).